Here is a 156-residue protein sequence, read N- to C-terminus: ATP synthase subunit b (156 aa).

A helical membrane pass occupies residues 7–27; sequence LIGQLIAFAIFVWFCMKYVWP.

Belongs to the ATPase B chain family. In terms of assembly, F-type ATPases have 2 components, F(1) - the catalytic core - and F(0) - the membrane proton channel. F(1) has five subunits: alpha(3), beta(3), gamma(1), delta(1), epsilon(1). F(0) has three main subunits: a(1), b(2) and c(10-14). The alpha and beta chains form an alternating ring which encloses part of the gamma chain. F(1) is attached to F(0) by a central stalk formed by the gamma and epsilon chains, while a peripheral stalk is formed by the delta and b chains.

It is found in the cell inner membrane. Functionally, f(1)F(0) ATP synthase produces ATP from ADP in the presence of a proton or sodium gradient. F-type ATPases consist of two structural domains, F(1) containing the extramembraneous catalytic core and F(0) containing the membrane proton channel, linked together by a central stalk and a peripheral stalk. During catalysis, ATP synthesis in the catalytic domain of F(1) is coupled via a rotary mechanism of the central stalk subunits to proton translocation. Its function is as follows. Component of the F(0) channel, it forms part of the peripheral stalk, linking F(1) to F(0). The sequence is that of ATP synthase subunit b from Histophilus somni (strain 129Pt) (Haemophilus somnus).